Reading from the N-terminus, the 606-residue chain is Armadillo repeat-containing X-linked protein 5 (606 aa).

A disordered region spans residues 1 to 85 (MIGSKTKRKA…KVKKKKDKTN (85 aa)). The segment covering 15-26 (GASSKPGTNSPA) has biased composition (polar residues). Over residues 40 to 59 (VKAEPKEEWGNQAEARDEAV) the composition is skewed to basic and acidic residues. ARM repeat units follow at residues 349–388 (CKSRTFSLEPVDFDKLVALLKLTRDPFIHEIATMIMGISP), 470–509 (VKFDYHHVVIYYVRYFISLLNKGSVKIKFQILRVLLCLSK), 511–551 (QANT…NINF), and 568–606 (SELISIFREAKEFDQKLQDLTDHSDPDVRDKVIRLILKL).

The protein belongs to the eutherian X-chromosome-specific Armcx family. Highly expressed in the developing neural tissues, neural crest derivatives and hind limbs.

This chain is Armadillo repeat-containing X-linked protein 5 (Armcx5), found in Mus musculus (Mouse).